The primary structure comprises 175 residues: Cyclic pyranopterin monophosphate synthase (175 aa).

Substrate contacts are provided by residues 78–80 (LCH) and 125–126 (ME). Residue Asp-140 is part of the active site.

It belongs to the MoaC family. In terms of assembly, homohexamer; trimer of dimers.

It catalyses the reaction (8S)-3',8-cyclo-7,8-dihydroguanosine 5'-triphosphate = cyclic pyranopterin phosphate + diphosphate. It functions in the pathway cofactor biosynthesis; molybdopterin biosynthesis. Functionally, catalyzes the conversion of (8S)-3',8-cyclo-7,8-dihydroguanosine 5'-triphosphate to cyclic pyranopterin monophosphate (cPMP). This is Cyclic pyranopterin monophosphate synthase from Rhodopirellula baltica (strain DSM 10527 / NCIMB 13988 / SH1).